The following is a 101-amino-acid chain: Urease subunit gamma (101 aa).

Belongs to the urease gamma subunit family. As to quaternary structure, heterotrimer of UreA (gamma), UreB (beta) and UreC (alpha) subunits. Three heterotrimers associate to form the active enzyme.

It localises to the cytoplasm. It carries out the reaction urea + 2 H2O + H(+) = hydrogencarbonate + 2 NH4(+). Its pathway is nitrogen metabolism; urea degradation; CO(2) and NH(3) from urea (urease route): step 1/1. The chain is Urease subunit gamma from Ureaplasma urealyticum serovar 10 (strain ATCC 33699 / Western).